The sequence spans 287 residues: Cell wall-binding protein YocH (287 aa).

An N-terminal signal peptide occupies residues 1-25 (MKKTIMSFVAVAALSTTAFGAHASA). LysM domains are found at residues 26-69 (KEIT…KLTI) and 78-121 (GQYT…TLSV). Over residues 130 to 143 (TATENAQTNAPQAA) the composition is skewed to low complexity. The tract at residues 130-193 (TATENAQTNA…SNTNNQEASK (64 aa)) is disordered. A compositionally biased stretch (basic and acidic residues) spans 165 to 181 (QETKAEAETSVNTEEKA). Residues 182-193 (VQSNTNNQEASK) are compositionally biased toward polar residues.

The protein resides in the secreted. It is found in the cell wall. The sequence is that of Cell wall-binding protein YocH (yocH) from Bacillus subtilis (strain 168).